Reading from the N-terminus, the 409-residue chain is Peptidase T (409 aa).

H78 lines the Zn(2+) pocket. D80 is an active-site residue. A Zn(2+)-binding site is contributed by D140. Residue E173 is the Proton acceptor of the active site. Zn(2+) contacts are provided by E174, D196, and H379.

It belongs to the peptidase M20B family. The cofactor is Zn(2+).

Its subcellular location is the cytoplasm. It carries out the reaction Release of the N-terminal residue from a tripeptide.. Cleaves the N-terminal amino acid of tripeptides. The polypeptide is Peptidase T (Salmonella enteritidis PT4 (strain P125109)).